A 31-amino-acid polypeptide reads, in one-letter code: Cytochrome b6-f complex subunit 6 (31 aa).

Residues 4–24 (ITSYFGFLLAALTITSALFIG) form a helical membrane-spanning segment.

This sequence belongs to the PetL family. As to quaternary structure, the 4 large subunits of the cytochrome b6-f complex are cytochrome b6, subunit IV (17 kDa polypeptide, PetD), cytochrome f and the Rieske protein, while the 4 small subunits are PetG, PetL, PetM and PetN. The complex functions as a dimer.

It is found in the plastid. It localises to the chloroplast thylakoid membrane. Its function is as follows. Component of the cytochrome b6-f complex, which mediates electron transfer between photosystem II (PSII) and photosystem I (PSI), cyclic electron flow around PSI, and state transitions. PetL is important for photoautotrophic growth as well as for electron transfer efficiency and stability of the cytochrome b6-f complex. In Gossypium hirsutum (Upland cotton), this protein is Cytochrome b6-f complex subunit 6.